The chain runs to 640 residues: uncharacterized protein (640 aa).

A disordered region spans residues Gln594–Glu614.

This is an uncharacterized protein from Rattus norvegicus (Rat).